Here is a 523-residue protein sequence, read N- to C-terminus: Translation initiation factor eIF2B subunit delta (523 aa).

The tract at residues 1–147 (MAAVAVAVRE…PSGVKRLPEY (147 aa)) is disordered. N-acetylalanine is present on Ala2. Ser12 carries the post-translational modification Phosphoserine. The span at 30 to 40 (EMTKEEKLQLR) shows a compositional bias: basic and acidic residues. A compositionally biased stretch (basic residues) spans 41–51 (KEKKQQKKKRK). Residue Thr86 is modified to Phosphothreonine. The span at 87 to 121 (PREKVPAGRSKAELRAERRAKQEAERALKQARKGE) shows a compositional bias: basic and acidic residues. Position 130 is a phosphoserine (Ser130). Positions 170–179 (RKDYGSKVSL) are may bind the chemical integrated stress response (ISR) inhibitor ISRIB.

The protein belongs to the eIF-2B alpha/beta/delta subunits family. In terms of assembly, component of the translation initiation factor 2B (eIF2B) complex which is a heterodecamer of two sets of five different subunits: alpha, beta, gamma, delta and epsilon. Subunits alpha, beta and delta comprise a regulatory subcomplex and subunits epsilon and gamma comprise a catalytic subcomplex. Within the complex, the hexameric regulatory complex resides at the center, with the two heterodimeric catalytic subcomplexes bound on opposite sides.

The protein localises to the cytoplasm. The protein resides in the cytosol. Its activity is regulated as follows. Activated by the chemical integrated stress response (ISR) inhibitor ISRIB which stimulates guanine nucleotide exchange factor activity for both phosphorylated and unphosphorylated eIF2. Acts as a component of the translation initiation factor 2B (eIF2B) complex, which catalyzes the exchange of GDP for GTP on eukaryotic initiation factor 2 (eIF2) gamma subunit. Its guanine nucleotide exchange factor activity is repressed when bound to eIF2 complex phosphorylated on the alpha subunit, thereby limiting the amount of methionyl-initiator methionine tRNA available to the ribosome and consequently global translation is repressed. The protein is Translation initiation factor eIF2B subunit delta (EIF2B4) of Homo sapiens (Human).